The following is a 431-amino-acid chain: Trigger factor (431 aa).

Positions 161–245 constitute a PPIase FKBP-type domain; the sequence is TDIVIGDVQK…VKEIKRMELP (85 aa).

It belongs to the FKBP-type PPIase family. Tig subfamily.

Its subcellular location is the cytoplasm. It catalyses the reaction [protein]-peptidylproline (omega=180) = [protein]-peptidylproline (omega=0). Functionally, involved in protein export. Acts as a chaperone by maintaining the newly synthesized protein in an open conformation. Functions as a peptidyl-prolyl cis-trans isomerase. This chain is Trigger factor, found in Chloroherpeton thalassium (strain ATCC 35110 / GB-78).